The following is a 173-amino-acid chain: NAD(P)H-quinone oxidoreductase subunit I, chloroplastic (173 aa).

4Fe-4S ferredoxin-type domains follow at residues 55 to 84 (GRIH…VDWD) and 95 to 124 (RSYS…MTEE). [4Fe-4S] cluster is bound by residues cysteine 64, cysteine 67, cysteine 70, cysteine 74, cysteine 104, cysteine 107, cysteine 110, and cysteine 114.

The protein belongs to the complex I 23 kDa subunit family. As to quaternary structure, NDH is composed of at least 16 different subunits, 5 of which are encoded in the nucleus. The cofactor is [4Fe-4S] cluster.

The protein localises to the plastid. The protein resides in the chloroplast thylakoid membrane. The catalysed reaction is a plastoquinone + NADH + (n+1) H(+)(in) = a plastoquinol + NAD(+) + n H(+)(out). It carries out the reaction a plastoquinone + NADPH + (n+1) H(+)(in) = a plastoquinol + NADP(+) + n H(+)(out). In terms of biological role, NDH shuttles electrons from NAD(P)H:plastoquinone, via FMN and iron-sulfur (Fe-S) centers, to quinones in the photosynthetic chain and possibly in a chloroplast respiratory chain. The immediate electron acceptor for the enzyme in this species is believed to be plastoquinone. Couples the redox reaction to proton translocation, and thus conserves the redox energy in a proton gradient. The sequence is that of NAD(P)H-quinone oxidoreductase subunit I, chloroplastic from Nephroselmis olivacea (Green alga).